The primary structure comprises 466 residues: Asparagine--tRNA ligase (466 aa).

This sequence belongs to the class-II aminoacyl-tRNA synthetase family. As to quaternary structure, homodimer.

It localises to the cytoplasm. The enzyme catalyses tRNA(Asn) + L-asparagine + ATP = L-asparaginyl-tRNA(Asn) + AMP + diphosphate + H(+). In Photobacterium profundum (strain SS9), this protein is Asparagine--tRNA ligase.